The primary structure comprises 166 residues: uncharacterized protein (166 aa).

This is an uncharacterized protein from Acidianus hospitalis (AFV-1).